The primary structure comprises 216 residues: Adenylate kinase (216 aa).

10–15 (GAGKGT) contacts ATP. The tract at residues 30 to 59 (STGDIFRAHMSQGTPLGKLAKEYVDAGKYV) is NMP. Residues T31, R36, 57–59 (KYV), 85–88 (GYPR), and Q92 each bind AMP. The LID stretch occupies residues 126–163 (GRRVCRSCGATYHVRFNPPREAGRCDRCGGELYQRSDD). Residue R127 participates in ATP binding. Zn(2+) contacts are provided by C130 and C133. Residue 136 to 137 (TY) coordinates ATP. Positions 150 and 153 each coordinate Zn(2+). Residues R160 and R171 each contribute to the AMP site. Q199 contacts ATP.

This sequence belongs to the adenylate kinase family. In terms of assembly, monomer.

It is found in the cytoplasm. It catalyses the reaction AMP + ATP = 2 ADP. It participates in purine metabolism; AMP biosynthesis via salvage pathway; AMP from ADP: step 1/1. Its function is as follows. Catalyzes the reversible transfer of the terminal phosphate group between ATP and AMP. Plays an important role in cellular energy homeostasis and in adenine nucleotide metabolism. This Symbiobacterium thermophilum (strain DSM 24528 / JCM 14929 / IAM 14863 / T) protein is Adenylate kinase.